We begin with the raw amino-acid sequence, 105 residues long: Pyrimidine/purine nucleoside phosphorylase (105 aa).

Belongs to the nucleoside phosphorylase PpnP family.

It catalyses the reaction a purine D-ribonucleoside + phosphate = a purine nucleobase + alpha-D-ribose 1-phosphate. The enzyme catalyses adenosine + phosphate = alpha-D-ribose 1-phosphate + adenine. The catalysed reaction is cytidine + phosphate = cytosine + alpha-D-ribose 1-phosphate. It carries out the reaction guanosine + phosphate = alpha-D-ribose 1-phosphate + guanine. It catalyses the reaction inosine + phosphate = alpha-D-ribose 1-phosphate + hypoxanthine. The enzyme catalyses thymidine + phosphate = 2-deoxy-alpha-D-ribose 1-phosphate + thymine. The catalysed reaction is uridine + phosphate = alpha-D-ribose 1-phosphate + uracil. It carries out the reaction xanthosine + phosphate = alpha-D-ribose 1-phosphate + xanthine. Functionally, catalyzes the phosphorolysis of diverse nucleosides, yielding D-ribose 1-phosphate and the respective free bases. Can use uridine, adenosine, guanosine, cytidine, thymidine, inosine and xanthosine as substrates. Also catalyzes the reverse reactions. The protein is Pyrimidine/purine nucleoside phosphorylase of Clostridioides difficile (strain 630) (Peptoclostridium difficile).